The chain runs to 561 residues: Urocanate hydratase (561 aa).

NAD(+) is bound by residues 52–53 (GG), Gln130, 176–178 (GMG), Glu196, Arg201, 242–243 (NA), 263–267 (QTSAH), 273–274 (YL), and Tyr322. Residue Cys410 is part of the active site. Gly492 contributes to the NAD(+) binding site.

This sequence belongs to the urocanase family. NAD(+) serves as cofactor.

The protein resides in the cytoplasm. It carries out the reaction 4-imidazolone-5-propanoate = trans-urocanate + H2O. Its pathway is amino-acid degradation; L-histidine degradation into L-glutamate; N-formimidoyl-L-glutamate from L-histidine: step 2/3. In terms of biological role, catalyzes the conversion of urocanate to 4-imidazolone-5-propionate. The polypeptide is Urocanate hydratase (Salmonella newport (strain SL254)).